Here is a 464-residue protein sequence, read N- to C-terminus: Chromosomal replication initiator protein DnaA (464 aa).

The domain I, interacts with DnaA modulators stretch occupies residues 1 to 82 (MSLSLWQQCL…LLRFEVGSKP (82 aa)). The domain II stretch occupies residues 82–127 (PITQVISQTVTASVSSAPAAPAARTAAPSRPSWDNAAAQPELSYRS). Positions 98 to 113 (APAAPAARTAAPSRPS) are enriched in low complexity. The disordered stretch occupies residues 98–117 (APAAPAARTAAPSRPSWDNA). A domain III, AAA+ region region spans residues 128 to 344 (NVNPKHTFDN…GALNRVIANA (217 aa)). ATP contacts are provided by glycine 172, glycine 174, lysine 175, and threonine 176. Positions 345-464 (NFTGRAITID…FSNLIRTLSS (120 aa)) are domain IV, binds dsDNA.

This sequence belongs to the DnaA family. Oligomerizes as a right-handed, spiral filament on DNA at oriC.

The protein localises to the cytoplasm. In terms of biological role, plays an important role in the initiation and regulation of chromosomal replication. Binds to the origin of replication; it binds specifically double-stranded DNA at a 9 bp consensus (dnaA box): 5'-TTATC[CA]A[CA]A-3'. DnaA binds to ATP and to acidic phospholipids. DnaA can inhibit its own gene expression as well as that of other genes. Its function is as follows. Plays an essential role in the initiation and regulation of chromosomal replication. ATP-DnaA binds to the origin of replication (oriC) to initiate formation of the DNA replication initiation complex once per cell cycle. Binds the DnaA box (a 9 base pair repeat at the origin) and separates the double-stranded (ds)DNA. Forms a right-handed helical filament on oriC DNA; dsDNA binds to the exterior of the filament while single-stranded (ss)DNA is stabiized in the filament's interior. The ATP-DnaA-oriC complex binds and stabilizes one strand of the AT-rich DNA unwinding element (DUE), permitting loading of DNA polymerase. After initiation quickly degrades to an ADP-DnaA complex that is not apt for DNA replication. Binds acidic phospholipids. This is Chromosomal replication initiator protein DnaA from Serratia marcescens.